Reading from the N-terminus, the 154-residue chain is Holo-[acyl-carrier-protein] synthase (154 aa).

Positions 8 and 57 each coordinate Mg(2+).

This sequence belongs to the P-Pant transferase superfamily. AcpS family. Mg(2+) is required as a cofactor.

The protein resides in the cytoplasm. The catalysed reaction is apo-[ACP] + CoA = holo-[ACP] + adenosine 3',5'-bisphosphate + H(+). Its function is as follows. Transfers the 4'-phosphopantetheine moiety from coenzyme A to a Ser of acyl-carrier-protein. This is Holo-[acyl-carrier-protein] synthase from Nitrosococcus oceani (strain ATCC 19707 / BCRC 17464 / JCM 30415 / NCIMB 11848 / C-107).